Reading from the N-terminus, the 240-residue chain is Peptidyl-tRNA hydrolase (240 aa).

TRNA is bound at residue Y14. H19 (proton acceptor) is an active-site residue. TRNA-binding residues include Y64, N66, and N112. The span at K190–P204 shows a compositional bias: basic and acidic residues. The interval K190–E240 is disordered. Positions H209 to P219 are enriched in polar residues.

It belongs to the PTH family. In terms of assembly, monomer.

The protein resides in the cytoplasm. The catalysed reaction is an N-acyl-L-alpha-aminoacyl-tRNA + H2O = an N-acyl-L-amino acid + a tRNA + H(+). In terms of biological role, hydrolyzes ribosome-free peptidyl-tRNAs (with 1 or more amino acids incorporated), which drop off the ribosome during protein synthesis, or as a result of ribosome stalling. Functionally, catalyzes the release of premature peptidyl moieties from peptidyl-tRNA molecules trapped in stalled 50S ribosomal subunits, and thus maintains levels of free tRNAs and 50S ribosomes. The polypeptide is Peptidyl-tRNA hydrolase (Rhizobium etli (strain ATCC 51251 / DSM 11541 / JCM 21823 / NBRC 15573 / CFN 42)).